Reading from the N-terminus, the 397-residue chain is MPQLSGGGGGGDPELCATDEMIPFKDEGDPQKEKIFAEISHPEEEGDLADIKSSLVNESEIIPASNGHEVVRQAPSSQEPYHDKAREHPDEGKHPDGGLYNKGPSYSSYSGYIMMPNMNSDPYMSNGSLSPPIPRTSNKVPVVQPSHAVHPLTPLITYSDEHFSPGSHPSHIPSDVNSKQGMSRHPPAPEIPTFYPLSPGGVGQITPPIGWQGQPVYPITGGFRQPYPSSLSGDTSMSRFSHHMIPGPPGPHTTGIPHPAIVTPQVKQEHPHTDSDLMHVKPQHEQRKEQEPKRPHIKKPLNAFMLYMKEMRANVVAECTLKESAAINQILGRRWHALSREEQAKYYELARKERQLHMQLYPGWSARDNYGKKKKRKREKLQESTSGTGPRMTAAYI.

Positions 1 to 60 (MPQLSGGGGGGDPELCATDEMIPFKDEGDPQKEKIFAEISHPEEEGDLADIKSSLVNESE) are CTNNB1-binding. Lys-25 participates in a covalent cross-link: Glycyl lysine isopeptide (Lys-Gly) (interchain with G-Cter in SUMO). Residues 59–102 (SEIIPASNGHEVVRQAPSSQEPYHDKAREHPDEGKHPDGGLYNK) are disordered. Over residues 80 to 96 (PYHDKAREHPDEGKHPD) the composition is skewed to basic and acidic residues. Phosphoserine is present on Ser-130. Thr-153 carries the post-translational modification Phosphothreonine; by NLK. Residue Ser-164 is modified to Phosphoserine; by NLK. 2 disordered regions span residues 164–191 (SPGS…APEI) and 266–296 (VKQE…KRPH). A Glycyl lysine isopeptide (Lys-Gly) (interchain with G-Cter in SUMO) cross-link involves residue Lys-267. Residues 267 to 294 (KQEHPHTDSDLMHVKPQHEQRKEQEPKR) show a composition bias toward basic and acidic residues. Positions 297–365 (IKKPLNAFML…LHMQLYPGWS (69 aa)) form a DNA-binding region, HMG box. The segment at 367-397 (RDNYGKKKKRKREKLQESTSGTGPRMTAAYI) is disordered.

The protein belongs to the TCF/LEF family. Binds the armadillo repeat of CTNNB1 and forms a stable complex. Binds TLE1, ALYREF/THOC4, MDFI and MDFIC. Interacts with NLK. Interacts with EP300 and PIASG. Interacts with DAZAP2. Phosphorylated at Thr-153 and/or Ser-164 by NLK. Phosphorylation by NLK at these sites represses LEF1-mediated transcriptional activation of target genes of the canonical Wnt signaling pathway. In terms of tissue distribution, expressed in Vgamma1.1 and Vgamma2 gamma-delta T-cells, however not expressed in gamma-delta thymocytes fated for Il17a expression (at protein level). Expressed in alpha-beta T-cell lineages. Expressed in the thymus. Found in distinct epithelial cell compartments of the skin and is abundant in the hair-producing progenitors of the follicle.

It is found in the nucleus. In terms of biological role, transcription factor that binds DNA in a sequence-specific manner. Participates in the Wnt signaling pathway. Activates transcription of target genes in the presence of CTNNB1 and EP300. PIASG antagonizes both Wnt-dependent and Wnt-independent activation by LEF1. TLE1, TLE2, TLE3 and TLE4 repress transactivation mediated by LEF1 and CTNNB1. Regulates T-cell receptor alpha enhancer function. Required for IL17A expressing gamma-delta T-cell maturation and development, via binding to regulator loci of BLK to modulate expression. Acts as a positive regulator of odontoblast differentiation during mesenchymal tooth germ formation, expression is repressed during the bell stage by MSX1-mediated inhibition of CTNNB1 signaling. May play a role in hair cell differentiation and follicle morphogenesis. This Mus musculus (Mouse) protein is Lymphoid enhancer-binding factor 1.